We begin with the raw amino-acid sequence, 329 residues long: Protein-arginine N-acetylglucosaminyltransferase NleB (329 aa).

N-beta-linked (GlcNAc) arginine; by autocatalysis glycosylation is present at Arg13. 48 to 50 (QWF) provides a ligand contact to UDP-N-acetyl-alpha-D-glucosamine. Residue Arg53 is glycosylated (N-beta-linked (GlcNAc) arginine; by autocatalysis). Tyr72 provides a ligand contact to UDP-N-acetyl-alpha-D-glucosamine. An N-beta-linked (GlcNAc) arginine; by autocatalysis glycan is attached at Arg159. 219-222 (YLDA) contributes to the UDP-N-acetyl-alpha-D-glucosamine binding site. The DXD motif motif lies at 221–223 (DAD). A Mn(2+)-binding site is contributed by Asp223. The active-site Proton acceptor is the Glu253. N-beta-linked (GlcNAc) arginine; by autocatalysis glycosylation occurs at Arg293. Residues Asn320 and Ser322 each contribute to the Mn(2+) site. UDP-N-acetyl-alpha-D-glucosamine contacts are provided by residues Ser322 and 327–329 (SSW).

The protein belongs to the glycosyltransferase NleB family. The cofactor is Mn(2+). Auto-glycosylated: arginine GlcNAcylation is required for activity toward death domain-containing host target proteins.

It localises to the secreted. The protein resides in the host cell. It carries out the reaction L-arginyl-[protein] + UDP-N-acetyl-alpha-D-glucosamine = N(omega)-(N-acetyl-beta-D-glucosaminyl)-L-arginyl-[protein] + UDP + H(+). Its function is as follows. Protein-arginine N-acetylglucosaminyltransferase effector that disrupts TNF signaling in infected cells, including NF-kappa-B signaling, apoptosis and necroptosis. Acts by catalyzing the transfer of a single N-acetylglucosamine (GlcNAc) to a conserved arginine residue in the death domain of host proteins FADD, TNFRSF1A and RIPK1: arginine GlcNAcylation prevents homotypic/heterotypic death domain interactions and assembly of the oligomeric TNF-alpha receptor complex, thereby disrupting TNF signaling. Has preference for host FADD as substrate compared to TNFRSF1A and RIPK1. Also acts on host proteins without a death domain: catalyzes GlcNAcylation of host GAPDH protein, thereby preventing GAPDH interaction with TRAF2 and TRAF3, leading to inhibit NF-kappa-B signaling and type I interferon production, respectively. Also displays intra-bacterial activity by mediating GlcNAcylation of glutathione synthetase GshB. Catalyzes auto-GlcNAcylation, which is required for activity toward death domain-containing host target proteins. The chain is Protein-arginine N-acetylglucosaminyltransferase NleB from Citrobacter rodentium.